The sequence spans 116 residues: Photosystem II reaction center Psb28 protein (116 aa).

This sequence belongs to the Psb28 family. Part of the photosystem II complex.

Its subcellular location is the plastid. The protein resides in the chloroplast thylakoid membrane. In Guillardia theta (Cryptophyte), this protein is Photosystem II reaction center Psb28 protein.